The following is a 61-amino-acid chain: Small ribosomal subunit protein uS14 (61 aa).

4 residues coordinate Zn(2+): Cys-24, Cys-27, Cys-40, and Cys-43.

The protein belongs to the universal ribosomal protein uS14 family. Zinc-binding uS14 subfamily. Part of the 30S ribosomal subunit. Contacts proteins S3 and S10. Zn(2+) is required as a cofactor.

Binds 16S rRNA, required for the assembly of 30S particles and may also be responsible for determining the conformation of the 16S rRNA at the A site. This Mycoplasmoides gallisepticum (strain R(low / passage 15 / clone 2)) (Mycoplasma gallisepticum) protein is Small ribosomal subunit protein uS14.